The chain runs to 216 residues: Large ribosomal subunit protein eL15 (216 aa).

A compositionally biased stretch (basic residues) spans 170–188; sequence RGLRKSKGFKGTVKHKWSR. The segment at 170–201 is disordered; it reads RGLRKSKGFKGTVKHKWSRKQKEREEKKRHEA. Basic and acidic residues predominate over residues 189–201; that stretch reads KQKEREEKKRHEA.

The protein belongs to the eukaryotic ribosomal protein eL15 family.

The chain is Large ribosomal subunit protein eL15 from Saccharolobus islandicus (strain M.16.27) (Sulfolobus islandicus).